The sequence spans 926 residues: DNA mismatch repair protein MutS (926 aa).

The segment at 1 to 60 (MAASQNPIQGSLFGGNEESDLNKAEKLKGSERSNVNLSHQQLKEDASLRPRIKQTPKNPN) is disordered. Positions 20–31 (DLNKAEKLKGSE) are enriched in basic and acidic residues. 726-733 (GPNASGKS) provides a ligand contact to ATP.

Belongs to the DNA mismatch repair MutS family.

This protein is involved in the repair of mismatches in DNA. It is possible that it carries out the mismatch recognition step. This protein has a weak ATPase activity. The sequence is that of DNA mismatch repair protein MutS from Prochlorococcus marinus (strain NATL2A).